Here is an 821-residue protein sequence, read N- to C-terminus: Cell wall integrity transcriptional regulator CAS5 (821 aa).

5 disordered regions span residues 42 to 66, 219 to 245, 305 to 432, 544 to 576, and 607 to 750; these read HLQS…LNQH, FESP…LSTP, TKSN…STSQ, QEEE…TSSL, and VKQE…KHKC. Residues 222-245 show a composition bias toward polar residues; it reads PQSHIQSQPSYSQGYHNQNSLSTP. Positions 305–318 are enriched in low complexity; it reads TKSNSTSSYNSTLN. The segment covering 319–329 has biased composition (polar residues); that stretch reads PFYTPSQQLSS. The span at 372-387 shows a compositional bias: basic residues; the sequence is QLRKAKSYTSLLRKKK. The span at 396-412 shows a compositional bias: low complexity; sequence QNQQHQQQQQQQQQQQQ. The segment covering 422 to 432 has biased composition (polar residues); sequence QNLSFPNSTSQ. Over residues 545-561 the composition is skewed to acidic residues; it reads EEEQEHQDEQMEIDSFE. 2 stretches are compositionally biased toward low complexity: residues 662-674 and 684-693; these read LVNK…NNDT and KNTNGNGNND. Residues 694-714 show a composition bias toward acidic residues; it reads NDNDSEENNDNVDDADDDDDG. C2H2-type zinc fingers lie at residues 748–770 and 776–801; these read HKCP…LKSH and FECQ…KKIH. At S769 the chain carries Phosphoserine.

Phosphorylation at Ser-769 and probably additional serine residues. GLC7 dephosphorylates CAS5 in response to cell wall stress which leads to its translocation to the nucleus.

It is found in the nucleus. The protein resides in the cytoplasm. Its function is as follows. Transcription factor that acts with ADA2 to promote cell wall integrity. Regulates the expression of target genes in concert with the transcriptional regulators SWI4 and SWI6. Crucial for proper cell cycle dynamics and responses to echinocandins, which inhibit beta-1,3-glucan synthesis. Has distinct transcriptional targets under basal and stress conditions. Also regulates a transcriptional network that influences the response to fluconazole. Plays a key role in adherence, hyphal development, and virulence. Acts as a repressor of hypha-specific genes during yeast-form growth. The polypeptide is Cell wall integrity transcriptional regulator CAS5 (Candida albicans (strain SC5314 / ATCC MYA-2876) (Yeast)).